The chain runs to 494 residues: Guanosine-5'-triphosphate,3'-diphosphate pyrophosphatase (494 aa).

Belongs to the GppA/Ppx family. GppA subfamily.

It catalyses the reaction guanosine 3'-diphosphate 5'-triphosphate + H2O = guanosine 3',5'-bis(diphosphate) + phosphate + H(+). The protein operates within purine metabolism; ppGpp biosynthesis; ppGpp from GTP: step 2/2. Functionally, catalyzes the conversion of pppGpp to ppGpp. Guanosine pentaphosphate (pppGpp) is a cytoplasmic signaling molecule which together with ppGpp controls the 'stringent response', an adaptive process that allows bacteria to respond to amino acid starvation, resulting in the coordinated regulation of numerous cellular activities. The protein is Guanosine-5'-triphosphate,3'-diphosphate pyrophosphatase of Shigella flexneri.